Here is a 257-residue protein sequence, read N- to C-terminus: Phycoerythrobilin:ferredoxin oxidoreductase (257 aa).

The protein belongs to the HY2 family.

The enzyme catalyses (3Z)-phycoerythrobilin + oxidized 2[4Fe-4S]-[ferredoxin] = 15,16-dihydrobiliverdin + reduced 2[4Fe-4S]-[ferredoxin] + 2 H(+). In terms of biological role, catalyzes the two-electron reduction of the C2 and C3(1) diene system of 15,16-dihydrobiliverdin. This is Phycoerythrobilin:ferredoxin oxidoreductase from Prochlorococcus marinus (strain MIT 9211).